Reading from the N-terminus, the 330-residue chain is DNA-directed RNA polymerase subunit alpha (330 aa).

The alpha N-terminal domain (alpha-NTD) stretch occupies residues M1–K237. Residues F251–E330 are alpha C-terminal domain (alpha-CTD).

It belongs to the RNA polymerase alpha chain family. As to quaternary structure, homodimer. The RNAP catalytic core consists of 2 alpha, 1 beta, 1 beta' and 1 omega subunit. When a sigma factor is associated with the core the holoenzyme is formed, which can initiate transcription.

It catalyses the reaction RNA(n) + a ribonucleoside 5'-triphosphate = RNA(n+1) + diphosphate. Its function is as follows. DNA-dependent RNA polymerase catalyzes the transcription of DNA into RNA using the four ribonucleoside triphosphates as substrates. The polypeptide is DNA-directed RNA polymerase subunit alpha (Legionella pneumophila subsp. pneumophila (strain Philadelphia 1 / ATCC 33152 / DSM 7513)).